Here is a 339-residue protein sequence, read N- to C-terminus: UDP-3-O-acylglucosamine N-acyltransferase (339 aa).

The active-site Proton acceptor is the histidine 239.

This sequence belongs to the transferase hexapeptide repeat family. LpxD subfamily. In terms of assembly, homotrimer.

The enzyme catalyses a UDP-3-O-[(3R)-3-hydroxyacyl]-alpha-D-glucosamine + a (3R)-hydroxyacyl-[ACP] = a UDP-2-N,3-O-bis[(3R)-3-hydroxyacyl]-alpha-D-glucosamine + holo-[ACP] + H(+). It participates in bacterial outer membrane biogenesis; LPS lipid A biosynthesis. Its function is as follows. Catalyzes the N-acylation of UDP-3-O-acylglucosamine using 3-hydroxyacyl-ACP as the acyl donor. Is involved in the biosynthesis of lipid A, a phosphorylated glycolipid that anchors the lipopolysaccharide to the outer membrane of the cell. In Aliivibrio fischeri (strain ATCC 700601 / ES114) (Vibrio fischeri), this protein is UDP-3-O-acylglucosamine N-acyltransferase.